The sequence spans 94 residues: Co-chaperonin GroES (94 aa).

It belongs to the GroES chaperonin family. In terms of assembly, heptamer of 7 subunits arranged in a ring. Interacts with the chaperonin GroEL.

The protein localises to the cytoplasm. Together with the chaperonin GroEL, plays an essential role in assisting protein folding. The GroEL-GroES system forms a nano-cage that allows encapsulation of the non-native substrate proteins and provides a physical environment optimized to promote and accelerate protein folding. GroES binds to the apical surface of the GroEL ring, thereby capping the opening of the GroEL channel. In Bacillus cereus (strain ZK / E33L), this protein is Co-chaperonin GroES.